The primary structure comprises 86 residues: Small ribosomal subunit protein bS20 (86 aa).

Belongs to the bacterial ribosomal protein bS20 family.

Functionally, binds directly to 16S ribosomal RNA. The sequence is that of Small ribosomal subunit protein bS20 from Mycolicibacterium gilvum (strain PYR-GCK) (Mycobacterium gilvum (strain PYR-GCK)).